A 105-amino-acid chain; its full sequence is Phosphoribosyl-ATP pyrophosphatase (105 aa).

Belongs to the PRA-PH family.

Its subcellular location is the cytoplasm. It carries out the reaction 1-(5-phospho-beta-D-ribosyl)-ATP + H2O = 1-(5-phospho-beta-D-ribosyl)-5'-AMP + diphosphate + H(+). It functions in the pathway amino-acid biosynthesis; L-histidine biosynthesis; L-histidine from 5-phospho-alpha-D-ribose 1-diphosphate: step 2/9. The sequence is that of Phosphoribosyl-ATP pyrophosphatase from Vesicomyosocius okutanii subsp. Calyptogena okutanii (strain HA).